Here is a 434-residue protein sequence, read N- to C-terminus: Trigger factor (434 aa).

The region spanning 161–246 (EDRVTVDFTG…LKKVEQRELP (86 aa)) is the PPIase FKBP-type domain.

This sequence belongs to the FKBP-type PPIase family. Tig subfamily.

Its subcellular location is the cytoplasm. The enzyme catalyses [protein]-peptidylproline (omega=180) = [protein]-peptidylproline (omega=0). Its function is as follows. Involved in protein export. Acts as a chaperone by maintaining the newly synthesized protein in an open conformation. Functions as a peptidyl-prolyl cis-trans isomerase. The chain is Trigger factor from Sodalis glossinidius (strain morsitans).